The chain runs to 101 residues: Large ribosomal subunit protein uL23 (101 aa).

It belongs to the universal ribosomal protein uL23 family. As to quaternary structure, part of the 50S ribosomal subunit. Contacts protein L29, and trigger factor when it is bound to the ribosome.

Its function is as follows. One of the early assembly proteins it binds 23S rRNA. One of the proteins that surrounds the polypeptide exit tunnel on the outside of the ribosome. Forms the main docking site for trigger factor binding to the ribosome. This chain is Large ribosomal subunit protein uL23, found in Haemophilus ducreyi (strain 35000HP / ATCC 700724).